The following is a 531-amino-acid chain: Zinc finger protein 703-B (531 aa).

The span at 1–10 (MNCSPPGSCT) shows a compositional bias: polar residues. 3 disordered regions span residues 1–28 (MNCS…ATLA), 88–249 (SQIG…VAPI), and 295–318 (VGNQ…LTGA). 2 stretches are compositionally biased toward low complexity: residues 19–28 (TPATPCATLA) and 113–122 (RSSSLKLGES). A compositionally biased stretch (polar residues) spans 171–180 (SPSSRVSSPG). A compositionally biased stretch (basic and acidic residues) spans 183-198 (CESKNNESQEKKEPEV). The span at 199 to 215 (NKSSLETSQANPTLTRA) shows a compositional bias: polar residues. Positions 216 to 227 (SISNSSAESSQS) are enriched in low complexity. The C2H2-type zinc-finger motif lies at 404 to 432 (HICNWVSASGPCDKRFATSEELLAHLRTH).

Belongs to the Elbow/Noc family.

It is found in the nucleus. The protein resides in the cytoplasm. Transcriptional corepressor which does not bind directly to DNA and may regulate transcription through recruitment of histone deacetylases to gene promoters. Regulates cell adhesion, migration and proliferation. Involved in specification of the lateral neural plate border (NPB). May be required for segmental gene expression during hindbrain development. This is Zinc finger protein 703-B (znf703-b) from Xenopus laevis (African clawed frog).